A 260-amino-acid polypeptide reads, in one-letter code: Fructose import ATP-binding protein FrcA (260 aa).

Residues 7–251 (LTARGLVKRY…DAVAFMTGAK (245 aa)) enclose the ABC transporter domain. 39 to 46 (GDNGAGKS) is an ATP binding site.

It belongs to the ABC transporter superfamily. In terms of assembly, the complex is composed of two ATP-binding proteins (FrcA), two transmembrane proteins (FrcC) and a solute-binding protein (FrcB).

The protein localises to the cell inner membrane. The enzyme catalyses D-fructose(out) + ATP + H2O = D-fructose(in) + ADP + phosphate + H(+). Functionally, part of the high-affinity ABC transporter complex FrcBCA involved in fructose uptake. Is also a high-affinity transporter for ribose and mannose. Responsible for energy coupling to the transport system. The protein is Fructose import ATP-binding protein FrcA of Rhizobium meliloti (Ensifer meliloti).